A 196-amino-acid chain; its full sequence is Transcriptional regulatory protein UhpA (196 aa).

Residues 3–116 (TVALIDDHLI…ELIAAVHTVA (114 aa)) form the Response regulatory domain. 4-aspartylphosphate is present on aspartate 54. The region spanning 131–196 (ASGRQDPLTK…ELARRMFDGW (66 aa)) is the HTH luxR-type domain. Positions 155 to 174 (VKEIAAELGLSPKTVHVHRA) form a DNA-binding region, H-T-H motif.

Post-translationally, phosphorylated and dephosphorylated by UhpB.

It is found in the cytoplasm. Its activity is regulated as follows. Phosphorylation by UhpB enhances DNA binding activity. Its function is as follows. Part of the UhpABC signaling cascade that controls the expression of the hexose phosphate transporter UhpT. Activates the transcription of the uhpT gene. Acts by binding specifically to the uhpT promoter region. This chain is Transcriptional regulatory protein UhpA (uhpA), found in Escherichia coli (strain K12).